Consider the following 236-residue polypeptide: Probable transmembrane ascorbate ferrireductase 4 (236 aa).

Residues 14 to 210 form the Cytochrome b561 domain; that stretch reads FARLSGLVVA…LGCIVITAAI (197 aa). 3 helical membrane-spanning segments follow: residues 17-37, 42-62, and 76-96; these read LSGLVVAVSVLYWALFLPNLG, TLHPLLMVIGFILVSGEAILI, and VHLWLQGMALASAVFGIWTKF. Heme b-binding residues include His-44, His-77, and His-110. A run of 3 helical transmembrane segments spans residues 112–132, 144–164, and 191–211; these read WMGLLSVSLFAAQWVTGFMSF, TFLPWHVFLGLYTYGLAIATA, and VNGLGLGLALLGCIVITAAIL. His-149 contributes to the heme b binding site.

Homodimer. Heme b serves as cofactor.

It localises to the membrane. It catalyses the reaction Fe(3+)(out) + L-ascorbate(in) = monodehydro-L-ascorbate radical(in) + Fe(2+)(out) + H(+). In terms of biological role, two-heme-containing cytochrome. May catalyze ascorbate-dependent trans-membrane ferric-chelate reduction. The chain is Probable transmembrane ascorbate ferrireductase 4 (CYB561D) from Arabidopsis thaliana (Mouse-ear cress).